The chain runs to 95 residues: Integration host factor subunit beta (95 aa).

This sequence belongs to the bacterial histone-like protein family. As to quaternary structure, heterodimer of an alpha and a beta chain.

This protein is one of the two subunits of integration host factor, a specific DNA-binding protein that functions in genetic recombination as well as in transcriptional and translational control. The sequence is that of Integration host factor subunit beta from Erwinia tasmaniensis (strain DSM 17950 / CFBP 7177 / CIP 109463 / NCPPB 4357 / Et1/99).